The sequence spans 476 residues: tRNA(Ile)-lysidine synthase (476 aa).

An ATP-binding site is contributed by serine 26–serine 31.

It belongs to the tRNA(Ile)-lysidine synthase family.

The protein resides in the cytoplasm. The catalysed reaction is cytidine(34) in tRNA(Ile2) + L-lysine + ATP = lysidine(34) in tRNA(Ile2) + AMP + diphosphate + H(+). Its function is as follows. Ligates lysine onto the cytidine present at position 34 of the AUA codon-specific tRNA(Ile) that contains the anticodon CAU, in an ATP-dependent manner. Cytidine is converted to lysidine, thus changing the amino acid specificity of the tRNA from methionine to isoleucine. The sequence is that of tRNA(Ile)-lysidine synthase from Bartonella quintana (strain Toulouse) (Rochalimaea quintana).